A 156-amino-acid polypeptide reads, in one-letter code: Small ribosomal subunit protein uS7 (156 aa).

It belongs to the universal ribosomal protein uS7 family. As to quaternary structure, part of the 30S ribosomal subunit. Contacts proteins S9 and S11.

In terms of biological role, one of the primary rRNA binding proteins, it binds directly to 16S rRNA where it nucleates assembly of the head domain of the 30S subunit. Is located at the subunit interface close to the decoding center, probably blocks exit of the E-site tRNA. The protein is Small ribosomal subunit protein uS7 of Lacticaseibacillus casei (strain BL23) (Lactobacillus casei).